A 161-amino-acid chain; its full sequence is Endoribonuclease YbeY (161 aa).

3 residues coordinate Zn(2+): His-120, His-124, and Asp-130.

Belongs to the endoribonuclease YbeY family. Zn(2+) serves as cofactor.

The protein localises to the cytoplasm. In terms of biological role, single strand-specific metallo-endoribonuclease involved in late-stage 70S ribosome quality control and in maturation of the 3' terminus of the 16S rRNA. This is Endoribonuclease YbeY from Chlamydia trachomatis serovar L2 (strain ATCC VR-902B / DSM 19102 / 434/Bu).